The sequence spans 354 residues: Myosin-binding protein H-like (354 aa).

The interval 1 to 47 is disordered; it reads MEAATAPEVAAGSKLKVKEASPADAEPPQASPGQGAGSPTPQLLPPI. A Phosphoserine modification is found at Ser-38. The 95-residue stretch at 45–139 folds into the Ig-like C2-type 1 domain; that stretch reads PPIEEHPKIW…GGLEATATID (95 aa). Residues 148-238 form the Fibronectin type-III domain; that stretch reads PPQSIKLVDV…ETAPITTDLA (91 aa). One can recognise an Ig-like C2-type 2 domain in the interval 261–345; that stretch reads PKFTQPLADC…VNPLGEASVD (85 aa). A disulfide bridge connects residues Cys-282 and Cys-333. Arg-321 carries the omega-N-methylarginine modification.

The protein belongs to the immunoglobulin superfamily. MyBP family. As to expression, expressed in heart, with higher expression in the atria. Expressed in left atrium and ventricle, arteria mammaria interna and skeletal muscle. In terms of tissue distribution, expressed specifically en the left atrium.

The protein resides in the cytoplasm. It localises to the myofibril. The protein localises to the sarcomere. Functionally, myosin-binding protein which plays a role in cardiac function. Seems to regulate conduction in the atria and ventricular conduction systems. This Homo sapiens (Human) protein is Myosin-binding protein H-like.